A 148-amino-acid chain; its full sequence is Large ribosomal subunit protein uL15 (148 aa).

The segment covering 1-12 has biased composition (basic and acidic residues); that stretch reads MSEPIKLHDLRP. A disordered region spans residues 1-52; it reads MSEPIKLHDLRPAKGANKPKTRVGRGEASKGKTAGRGTKGTKARKQVSAAFE.

It belongs to the universal ribosomal protein uL15 family. As to quaternary structure, part of the 50S ribosomal subunit.

Its function is as follows. Binds to the 23S rRNA. In Corynebacterium diphtheriae (strain ATCC 700971 / NCTC 13129 / Biotype gravis), this protein is Large ribosomal subunit protein uL15.